We begin with the raw amino-acid sequence, 293 residues long: Nucleotide-binding protein BA_5384/GBAA_5384/BAS5004 (293 aa).

An ATP-binding site is contributed by 14–21; that stretch reads GMSGAGKT. GTP is bound at residue 65-68; sequence DLRG.

It belongs to the RapZ-like family.

Its function is as follows. Displays ATPase and GTPase activities. The polypeptide is Nucleotide-binding protein BA_5384/GBAA_5384/BAS5004 (Bacillus anthracis).